Here is a 456-residue protein sequence, read N- to C-terminus: MSDLTPAEIVIELDKYIVGQAKAKRSVAIALRNRWRRRQVPEAMREEIAPKNIILIGPTGVGKTEIARRLARLTDSPFLKIEASKFTEVGYVGRDVESMVRDLVELTVTHLKVSEREAVREKAVRLAEERILDVLLPRPEGPQRADGDEPLGSHIEIVSDDDGRVSTREKLRTMLRAGKLKDRYVDLELADRSMPMVEIFSNSGLEEMGVNFKDMFAGLLPKNKKRRKVKVPEALEMLTDEEAQNLVDMDRVVRMAVEKVEQSGIIFLDEIDKIVATSKGSGPDVSREGVQRDLLPIVEGSTVMTKHGAVKTDHILFIASGAFHMCKPSDLIPELQGRFPIRVELDALGKEEFFRILIEPENALLLQYIELLRTEGVDVAFADEAVREIAAMAEEVNAGTENIGARRLHTLMEYLLEDLLFDAPDRAGTKVAIDRAYVTDRLKTIRGNEDLSRFIL.

Residues Val18, 60 to 65 (GVGKTE), Asp269, Glu334, and Arg406 contribute to the ATP site.

The protein belongs to the ClpX chaperone family. HslU subfamily. In terms of assembly, a double ring-shaped homohexamer of HslV is capped on each side by a ring-shaped HslU homohexamer. The assembly of the HslU/HslV complex is dependent on binding of ATP.

The protein localises to the cytoplasm. In terms of biological role, ATPase subunit of a proteasome-like degradation complex; this subunit has chaperone activity. The binding of ATP and its subsequent hydrolysis by HslU are essential for unfolding of protein substrates subsequently hydrolyzed by HslV. HslU recognizes the N-terminal part of its protein substrates and unfolds these before they are guided to HslV for hydrolysis. This Desulfosudis oleivorans (strain DSM 6200 / JCM 39069 / Hxd3) (Desulfococcus oleovorans) protein is ATP-dependent protease ATPase subunit HslU.